A 222-amino-acid polypeptide reads, in one-letter code: Disulfide bond formation protein D (222 aa).

The signal sequence occupies residues 1–36; sequence MKKKQQSSAKFAVILTVVVVVLLAAIVIINNKTEQG. Residues 37–220 form the Thioredoxin domain; the sequence is NDAVSGQPSI…IKETIEKELK (184 aa). An intrachain disulfide couples Cys69 to Cys72.

This sequence belongs to the thioredoxin family. DsbA subfamily.

It localises to the cell membrane. Its subcellular location is the membrane raft. In terms of biological role, required for the stabilization, possibly via formation of a disulfide bond, of the obligatory competence protein ComGC. May be required for the stability of secreted proteins with disulfide bonds. Not required for sporulation. The sequence is that of Disulfide bond formation protein D (bdbD) from Bacillus subtilis (strain 168).